Here is a 304-residue protein sequence, read N- to C-terminus: Gamma-gliadin B-I (304 aa).

The first 23 residues, 1 to 23 (MKTFLVFALIAVVATSAIAQMET), serve as a signal peptide directing secretion. The tract at residues 32–92 (PWQQQPLPPQ…PFSQQQQPVL (61 aa)) is disordered. The span at 41–92 (QQSFSQQPPFSQQQQQPLPQQPSFSQQQPPFSQQQPILSQQPPFSQQQQPVL) shows a compositional bias: low complexity.

This sequence belongs to the gliadin/glutenin family.

Gliadin is the major seed storage protein in wheat. The chain is Gamma-gliadin B-I from Triticum aestivum (Wheat).